We begin with the raw amino-acid sequence, 247 residues long: 2,3-bisphosphoglycerate-dependent phosphoglycerate mutase (247 aa).

Substrate contacts are provided by residues R7–N14, T20–G21, R59, E86–Y89, K97, R113–R114, and G182–N183. The Tele-phosphohistidine intermediate role is filled by H8. Catalysis depends on E86, which acts as the Proton donor/acceptor.

Belongs to the phosphoglycerate mutase family. BPG-dependent PGAM subfamily.

The catalysed reaction is (2R)-2-phosphoglycerate = (2R)-3-phosphoglycerate. It participates in carbohydrate degradation; glycolysis; pyruvate from D-glyceraldehyde 3-phosphate: step 3/5. Its function is as follows. Catalyzes the interconversion of 2-phosphoglycerate and 3-phosphoglycerate. This is 2,3-bisphosphoglycerate-dependent phosphoglycerate mutase from Treponema denticola (strain ATCC 35405 / DSM 14222 / CIP 103919 / JCM 8153 / KCTC 15104).